The primary structure comprises 30 residues: Ornithine carbamoyltransferase (30 aa).

The protein belongs to the aspartate/ornithine carbamoyltransferase superfamily. OTCase family.

Its subcellular location is the cytoplasm. It carries out the reaction carbamoyl phosphate + L-ornithine = L-citrulline + phosphate + H(+). The protein operates within amino-acid biosynthesis; L-arginine biosynthesis; L-arginine from L-ornithine and carbamoyl phosphate: step 1/3. Has vitronectin and fibronectin-binding activity. This is Ornithine carbamoyltransferase (argF) from Staphylococcus epidermidis.